Reading from the N-terminus, the 1683-residue chain is Genome polyprotein (1683 aa).

The Extracellular segment spans residues 1 to 445; it reads MRCIGISNRD…LHQVFGAIYG (445 aa). 4 disulfides stabilise this stretch: C3–C30, C60–C121, C74–C105, and C92–C116. N67 is a glycosylation site (N-linked (GlcNAc...) asparagine; by host). A fusion peptide region spans residues 98 to 111; sequence DRGWGNGCGLFGKG. N-linked (GlcNAc...) asparagine; by host glycosylation occurs at N153. 2 disulfide bridges follow: C185–C285 and C302–C333. A helical membrane pass occupies residues 446 to 466; sequence AAFSGVSWTMKILIGVIITWI. Over 467-472 the chain is Cytoplasmic; sequence GMNSRS. The chain crosses the membrane as a helical span at residues 473–493; it reads TSLSVSLVLVGIVTLYLGVMV. Residues 494-915 are Extracellular-facing; sequence QADSGCVVSW…MVGATMTDDI (422 aa). Cystine bridges form between C499-C510, C550-C638, C674-C718, C775-C824, C786-C808, and C807-C811. The N-linked (GlcNAc...) asparagine; by host glycan is linked to N702. Residues 916–940 traverse the membrane as a helical segment; that stretch reads GMGVTYLALLAAFRVRPTFAAGLLL. The Cytoplasmic portion of the chain corresponds to 941 to 946; the sequence is RKLTSK. Residues 947 to 965 traverse the membrane as a helical segment; sequence ELMMTTIGIVLLSQSSIPE. At 966–989 the chain is on the lumenal side; that stretch reads TILELTDALALGMMVLKMVRNMEK. A helical membrane pass occupies residues 990-1010; the sequence is YQLAVTIMAILCVPNAVILQN. A1011 is a topological domain (cytoplasmic). A helical transmembrane segment spans residues 1012–1030; sequence WKVSCTILAVVSVSPLLLT. Residues 1031–1037 are Lumenal-facing; it reads SSQQKAD. A helical membrane pass occupies residues 1038–1058; that stretch reads WIPLALTIKGLNPTAIFLTTL. Topologically, residues 1059–1683 are cytoplasmic; sequence SRTSKKRAGV…EFKEFAAGRK (625 aa). Residues 1066-1243 form the Peptidase S7 domain; it reads AGVLWDVPSP…EKSIEDNPEI (178 aa). Active-site charge relay system; for serine protease NS3 activity residues include H1116, D1140, and S1200. The region spanning 1245–1401 is the Helicase ATP-binding domain; the sequence is DDIFRKRRLT…QSNAPIMDEE (157 aa). An important for RNA-binding region spans residues 1249–1252; it reads RKRR. 1258 to 1265 serves as a coordination point for ATP; it reads LHPGAGKT. Residues 1349 to 1352 carry the DEAH box motif; it reads DEAH. The Helicase C-terminal domain maps to 1411 to 1582; sequence SGHEWVTDFK…IFEPEREKVD (172 aa).

As to quaternary structure, capsid protein C: Homodimer. Interacts (via N-terminus) with host EXOC1 (via C-terminus); this interaction results in EXOC1 degradation through the proteasome degradation pathway. Protein prM: Forms heterodimers with envelope protein E in the endoplasmic reticulum and Golgi. Homodimer; in the endoplasmic reticulum and Golgi. Interacts with protein prM. Interacts with non-structural protein 1. In terms of assembly, homodimer; Homohexamer when secreted. Interacts with envelope protein E. As to quaternary structure, interacts (via N-terminus) with serine protease NS3. Non-structural protein 2B: Forms a heterodimer with serine protease NS3. May form homooligomers. Forms a heterodimer with NS2B. Interacts with NS4B. Interacts with unphosphorylated RNA-directed RNA polymerase NS5; this interaction stimulates RNA-directed RNA polymerase NS5 guanylyltransferase activity. Interacts with host SHFL. In terms of processing, specific enzymatic cleavages in vivo yield mature proteins. Cleavages in the lumen of endoplasmic reticulum are performed by host signal peptidase, wereas cleavages in the cytoplasmic side are performed by the Serine protease NS3. Signal cleavage at the 2K-4B site requires a prior NS3 protease-mediated cleavage at the 4A-2K site. Post-translationally, N-glycosylated. The excreted form is glycosylated and this is required for efficient secretion of the protein from infected cells. N-glycosylated. In terms of processing, specific enzymatic cleavages in vivo yield mature proteins. Cleavages in the lumen of endoplasmic reticulum are performed by host signal peptidase, wereas cleavages in the cytoplasmic side are performed by serine protease NS3. Signal cleavage at the 2K-4B site requires a prior NS3 protease-mediated cleavage at the 4A-2K site.

It localises to the virion membrane. The protein resides in the host endoplasmic reticulum membrane. It is found in the secreted. The catalysed reaction is Selective hydrolysis of -Xaa-Xaa-|-Yaa- bonds in which each of the Xaa can be either Arg or Lys and Yaa can be either Ser or Ala.. It carries out the reaction a ribonucleoside 5'-triphosphate + H2O = a ribonucleoside 5'-diphosphate + phosphate + H(+). It catalyses the reaction ATP + H2O = ADP + phosphate + H(+). Its function is as follows. Binds to host cell surface receptor and mediates fusion between viral and cellular membranes. Envelope protein is synthesized in the endoplasmic reticulum in the form of heterodimer with protein prM. They play a role in virion budding in the ER, and the newly formed immature particle is covered with 60 spikes composed of heterodimer between precursor prM and envelope protein E. The virion is transported to the Golgi apparatus where the low pH causes dissociation of PrM-E heterodimers and formation of E homodimers. prM-E cleavage is inefficient, and many virions are only partially matured. These uncleaved prM would play a role in immune evasion. In terms of biological role, involved in immune evasion, pathogenesis and viral replication. Once cleaved off the polyprotein, is targeted to three destinations: the viral replication cycle, the plasma membrane and the extracellular compartment. Essential for viral replication. Required for formation of the replication complex and recruitment of other non-structural proteins to the ER-derived membrane structures. Excreted as a hexameric lipoparticle that plays a role against host immune response. Antagonizing the complement function. Binds to the host macrophages and dendritic cells. Inhibits signal transduction originating from Toll-like receptor 3 (TLR3). Functionally, disrupts the host endothelial glycocalyx layer of host pulmonary microvascular endothelial cells, inducing degradation of sialic acid and shedding of heparan sulfate proteoglycans. NS1 induces expression of sialidases, heparanase, and activates cathepsin L, which activates heparanase via enzymatic cleavage. These effects are probably linked to the endothelial hyperpermeability observed in severe dengue disease. Component of the viral RNA replication complex that functions in virion assembly and antagonizes the host immune response. Its function is as follows. Serine protease subunit NS2B: Required cofactor for the serine protease function of NS3. May have membrane-destabilizing activity and form viroporins. In terms of biological role, displays three enzymatic activities: serine protease, NTPase and RNA helicase. NS3 serine protease, in association with NS2B, performs its autocleavage and cleaves the polyprotein at dibasic sites in the cytoplasm: C-prM, NS2A-NS2B, NS2B-NS3, NS3-NS4A, NS4A-2K and NS4B-NS5. NS3 RNA helicase binds RNA and unwinds dsRNA in the 3' to 5' direction. The polypeptide is Genome polyprotein (Aedimorphus (Red guenon)).